We begin with the raw amino-acid sequence, 113 residues long: uncharacterized protein (113 aa).

It is found in the cytoplasm. The protein resides in the nucleus. This is an uncharacterized protein from Saccharomyces cerevisiae (strain ATCC 204508 / S288c) (Baker's yeast).